Here is a 119-residue protein sequence, read N- to C-terminus: Large ribosomal subunit protein bL20 (119 aa).

Belongs to the bacterial ribosomal protein bL20 family.

Binds directly to 23S ribosomal RNA and is necessary for the in vitro assembly process of the 50S ribosomal subunit. It is not involved in the protein synthesizing functions of that subunit. This Streptococcus pneumoniae serotype 2 (strain D39 / NCTC 7466) protein is Large ribosomal subunit protein bL20.